The sequence spans 1311 residues: Clustered mitochondria protein homolog (1311 aa).

Low complexity predominate over residues 1-18 (MAEKTNGAAAPNGAADAP). Residues 1–27 (MAEKTNGAAAPNGAADAPKSSPEQAQD) form a disordered region. Residues 324–568 (DITRTQESFL…RITPLDVSWQ (245 aa)) enclose the Clu domain. One copy of the TPR 1 repeat lies at 491–525 (IDYGAVDGKDLVATDERFVPQFQKLSKALKVKPHA). Residues 606 to 630 (SEVAKRGQAKKDQAAVEEKKEAKAE) are compositionally biased toward basic and acidic residues. Disordered regions lie at residues 606–694 (SEVA…SSDR) and 925–966 (PAPV…SSTI). Acidic residues predominate over residues 631–661 (SEEDSDSSSEEESSSDESDSEESSSDEDEEE). Over residues 665-675 (PKKKSVPKKAA) the composition is skewed to basic residues. Residues 676-694 (KKEEVKEEKKDEKEASSDR) are compositionally biased toward basic and acidic residues. 3 TPR repeats span residues 1034–1067 (ARVY…AERT), 1076–1109 (LLDY…WKII), and 1118–1151 (ITTI…CEVV). Positions 1276 to 1286 (LKFIEGTDKQK) are enriched in basic and acidic residues. The segment at 1276–1311 (LKFIEGTDKQKKPAAKKRTGRANPKRRGAEPVSTKA) is disordered. Basic residues predominate over residues 1287 to 1301 (KPAAKKRTGRANPKR).

Belongs to the CLU family. In terms of assembly, may associate with the eukaryotic translation initiation factor 3 (eIF-3) complex.

The protein resides in the cytoplasm. MRNA-binding protein involved in proper cytoplasmic distribution of mitochondria. This Pyricularia oryzae (strain 70-15 / ATCC MYA-4617 / FGSC 8958) (Rice blast fungus) protein is Clustered mitochondria protein homolog.